The primary structure comprises 1323 residues: Clustered mitochondria protein homolog (1323 aa).

Residues 103 to 141 form a TPR 1 repeat; that stretch reads KEKPYNLAAIYDHLNKFREVIGLHFLDKYSSEVGVLSGV. Positions 149–186 are disordered; sequence LQDVKETEPETQDDKDKETDETKSTKEDSNQTEEKKSE. A compositionally biased stretch (basic and acidic residues) spans 150 to 186; sequence QDVKETEPETQDDKDKETDETKSTKEDSNQTEEKKSE. The Clu domain occupies 351-608; the sequence is FANQPDASRS…RATPLDIEFI (258 aa). Residues 530–563 form a TPR 2 repeat; that stretch reads CYGLSTDGSKIFSDSSFENVLKPIAEAFHLKPHP. A compositionally biased stretch (basic and acidic residues) spans 764-801; sequence NEEEISKRKEESEKKATEGKDQDKEEEKANDNEKNKED. The disordered stretch occupies residues 764-808; it reads NEEEISKRKEESEKKATEGKDQDKEEEKANDNEKNKEDDKEEVSN. TPR repeat units follow at residues 1042–1076, 1099–1132, 1141–1174, and 1183–1216; these read LSVY…KSEA, ITAY…WTLV, VNTY…STKL, and GMLR…FTKF. Residues 1250–1323 form a disordered region; it reads KALAQQASAS…KKSNNKKSKK (74 aa). Residues 1308-1323 show a composition bias toward basic residues; it reads PKKQLKKKSNNKKSKK.

Belongs to the CLU family. May associate with the eukaryotic translation initiation factor 3 (eIF-3) complex.

The protein localises to the cytoplasm. In terms of biological role, mRNA-binding protein involved in proper cytoplasmic distribution of mitochondria. The protein is Clustered mitochondria protein homolog of Debaryomyces hansenii (strain ATCC 36239 / CBS 767 / BCRC 21394 / JCM 1990 / NBRC 0083 / IGC 2968) (Yeast).